The primary structure comprises 160 residues: Major strawberry allergen Fra a 1.05 (160 aa).

The protein belongs to the BetVI family. Post-translationally, phosphorylated in vivo. Phosphorylation prevents its activity as ribonuclease.

Functionally, possesses ribonuclease activity in vitro. In Fragaria ananassa (Strawberry), this protein is Major strawberry allergen Fra a 1.05.